A 190-amino-acid polypeptide reads, in one-letter code: Threonylcarbamoyl-AMP synthase (190 aa).

Positions 7 to 190 constitute a YrdC-like domain; sequence ADAISFIVDV…ALTGELFRQG (184 aa).

The protein belongs to the SUA5 family. TsaC subfamily.

It is found in the cytoplasm. It carries out the reaction L-threonine + hydrogencarbonate + ATP = L-threonylcarbamoyladenylate + diphosphate + H2O. Functionally, required for the formation of a threonylcarbamoyl group on adenosine at position 37 (t(6)A37) in tRNAs that read codons beginning with adenine. Catalyzes the conversion of L-threonine, HCO(3)(-)/CO(2) and ATP to give threonylcarbamoyl-AMP (TC-AMP) as the acyladenylate intermediate, with the release of diphosphate. This is Threonylcarbamoyl-AMP synthase from Cronobacter sakazakii (strain ATCC BAA-894) (Enterobacter sakazakii).